A 428-amino-acid polypeptide reads, in one-letter code: Glutamate-1-semialdehyde 2,1-aminomutase (428 aa).

Lysine 267 is subject to N6-(pyridoxal phosphate)lysine.

The protein belongs to the class-III pyridoxal-phosphate-dependent aminotransferase family. HemL subfamily. As to quaternary structure, homodimer. Pyridoxal 5'-phosphate serves as cofactor.

The protein resides in the cytoplasm. It carries out the reaction (S)-4-amino-5-oxopentanoate = 5-aminolevulinate. Its pathway is porphyrin-containing compound metabolism; protoporphyrin-IX biosynthesis; 5-aminolevulinate from L-glutamyl-tRNA(Glu): step 2/2. The protein is Glutamate-1-semialdehyde 2,1-aminomutase of Pelobacter propionicus (strain DSM 2379 / NBRC 103807 / OttBd1).